The chain runs to 473 residues: Glutamyl-tRNA reductase (473 aa).

Residues T49–R52, S109, E114–Q116, and Q120 each bind substrate. C50 acts as the Nucleophile in catalysis. NADP(+) is bound at residue G189–A194. The interval V422 to P473 is disordered.

It belongs to the glutamyl-tRNA reductase family. As to quaternary structure, homodimer.

The enzyme catalyses (S)-4-amino-5-oxopentanoate + tRNA(Glu) + NADP(+) = L-glutamyl-tRNA(Glu) + NADPH + H(+). It participates in porphyrin-containing compound metabolism; protoporphyrin-IX biosynthesis; 5-aminolevulinate from L-glutamyl-tRNA(Glu): step 1/2. Functionally, catalyzes the NADPH-dependent reduction of glutamyl-tRNA(Glu) to glutamate 1-semialdehyde (GSA). This chain is Glutamyl-tRNA reductase, found in Acidothermus cellulolyticus (strain ATCC 43068 / DSM 8971 / 11B).